The chain runs to 378 residues: 3-dehydroquinate synthase (378 aa).

NAD(+)-binding positions include 115 to 119 (GVVGD), 139 to 140 (TS), lysine 152, and lysine 161. Zn(2+) contacts are provided by glutamate 194, histidine 256, and histidine 275.

The protein belongs to the sugar phosphate cyclases superfamily. Dehydroquinate synthase family. Requires Co(2+) as cofactor. Zn(2+) is required as a cofactor. The cofactor is NAD(+).

Its subcellular location is the cytoplasm. The catalysed reaction is 7-phospho-2-dehydro-3-deoxy-D-arabino-heptonate = 3-dehydroquinate + phosphate. The protein operates within metabolic intermediate biosynthesis; chorismate biosynthesis; chorismate from D-erythrose 4-phosphate and phosphoenolpyruvate: step 2/7. Functionally, catalyzes the conversion of 3-deoxy-D-arabino-heptulosonate 7-phosphate (DAHP) to dehydroquinate (DHQ). This chain is 3-dehydroquinate synthase, found in Brucella anthropi (strain ATCC 49188 / DSM 6882 / CCUG 24695 / JCM 21032 / LMG 3331 / NBRC 15819 / NCTC 12168 / Alc 37) (Ochrobactrum anthropi).